The following is a 105-amino-acid chain: Cortistatin (105 aa).

The first 18 residues, 1–18 (MPLSPGLLLLLLSGATAT), serve as a signal peptide directing secretion. Positions 19–74 (AALPLEGGPTGRDSEHMQEAAGIRKSSLLTFLAWWFEWTSQASAGPLIGEEAREVA) are excised as a propeptide. A disulfide bridge links C93 with C104.

This sequence belongs to the somatostatin family. Expressed in a subset of GABAergic cells in the cortex and hippocampus.

Its subcellular location is the secreted. Binds to all human somatostatin receptor (SSTR) subtypes. It also inhibits cAMP production induced by forskolin through SSTRs. This chain is Cortistatin (CORT), found in Homo sapiens (Human).